The chain runs to 208 residues: MKLVEVKHPLVKHKLGLMRAADISTKNFRELATEVGSLLTYEATSDLETEKVIIDGWCGDVEIDRIKGKKVTVVPILRAGLGMMDGVLEHIPSARISVVGMYRNEETLEPVPYFQKLASDLEERLAIVVDPMLATGGSMIATIDLLKQKGCKQIKVLVLVAAPEGIKALEAAHPDIEVYTASIDSHLNEQGYIVPGLGDAGDKIFGTK.

5-phospho-alpha-D-ribose 1-diphosphate-binding positions include arginine 78, arginine 103, and 130–138 (DPMLATGGS). Uracil is bound by residues isoleucine 193 and 198 to 200 (GDA). Position 199 (aspartate 199) interacts with 5-phospho-alpha-D-ribose 1-diphosphate.

This sequence belongs to the UPRTase family. The cofactor is Mg(2+).

The catalysed reaction is UMP + diphosphate = 5-phospho-alpha-D-ribose 1-diphosphate + uracil. The protein operates within pyrimidine metabolism; UMP biosynthesis via salvage pathway; UMP from uracil: step 1/1. Allosterically activated by GTP. Functionally, catalyzes the conversion of uracil and 5-phospho-alpha-D-ribose 1-diphosphate (PRPP) to UMP and diphosphate. This is Uracil phosphoribosyltransferase from Actinobacillus succinogenes (strain ATCC 55618 / DSM 22257 / CCUG 43843 / 130Z).